The sequence spans 569 residues: Protein germ cell-less (569 aa).

Residues 17 to 43 are disordered; it reads SNRRKRKRSTDSSLGKDDPAQLDTTQP. The region spanning 66-136 is the BTB domain; the sequence is SDVAVMALDK…MYSDEIEIES (71 aa). Residues 517–553 form a disordered region; sequence GANSDRPLSPSSADDSAVFIGDSEPSTPSSPAPRPRI.

It is found in the cytoplasm. Required for the specification of pole cells and germ cell formation. Mothers with reduced glc function give rise to sterile adult progeny that lack germ cells. This is Protein germ cell-less (gcl) from Drosophila melanogaster (Fruit fly).